The sequence spans 466 residues: Protein tilB homolog (466 aa).

LRR repeat units follow at residues 22-43 (SLEE…DKWC), 45-66 (DLKI…SKLK), 67-88 (KLEY…EGCE), and 89-110 (ELAK…KTLK). The LRRCT domain maps to 123–161 (NPCAFFDHYREFVVATLPQLKWLDGKGIEPSERIKALQE). Residues 178–204 (LKRAKLKEEAQRKHQEEDKNEDKRSNA) adopt a coiled-coil conformation. Composition is skewed to basic and acidic residues over residues 185–202 (EEAQ…DKRS) and 269–279 (EKQRKNQEKLS). Disordered regions lie at residues 185–206 (EEAQ…NAGF) and 269–288 (EKQR…VKPP). Positions 301–396 (VNEPKIDFSL…GGQRAFTSVK (96 aa)) constitute a CS domain. Positions 418–466 (VDPSKHSFPDVTNIVQGKKHTPRRRPEPKIIPSEEDPTFEDNPEVPPLI) are disordered. Acidic residues predominate over residues 450 to 460 (SEEDPTFEDNP).

This sequence belongs to the tilB family. As to quaternary structure, interacts (via CS domain) with ZMYND10 (via C-terminus).

The protein resides in the cytoplasm. Its subcellular location is the cell projection. The protein localises to the cilium. Its function is as follows. May play a role in dynein arm assembly, hence essential for proper axoneme building for cilia motility. This chain is Protein tilB homolog (LRCC6), found in Macaca fascicularis (Crab-eating macaque).